The primary structure comprises 237 residues: Uridylate kinase (237 aa).

11 to 14 lines the ATP pocket; the sequence is KLSG. Gly-53 contributes to the UMP binding site. 2 residues coordinate ATP: Gly-54 and Arg-58. UMP-binding positions include Asp-73 and 134 to 141; that span reads TGNPFFTT. 3 residues coordinate ATP: Thr-161, Tyr-167, and Asp-170.

It belongs to the UMP kinase family. Homohexamer.

It is found in the cytoplasm. It carries out the reaction UMP + ATP = UDP + ADP. The protein operates within pyrimidine metabolism; CTP biosynthesis via de novo pathway; UDP from UMP (UMPK route): step 1/1. Inhibited by UTP. Catalyzes the reversible phosphorylation of UMP to UDP. The chain is Uridylate kinase from Burkholderia ambifaria (strain ATCC BAA-244 / DSM 16087 / CCUG 44356 / LMG 19182 / AMMD) (Burkholderia cepacia (strain AMMD)).